Consider the following 872-residue polypeptide: DNA mismatch repair protein MutS (872 aa).

Position 602–609 (602–609) interacts with ATP; the sequence is GPNMSGKS.

The protein belongs to the DNA mismatch repair MutS family.

Functionally, this protein is involved in the repair of mismatches in DNA. It is possible that it carries out the mismatch recognition step. This protein has a weak ATPase activity. The polypeptide is DNA mismatch repair protein MutS (Staphylococcus aureus (strain MRSA252)).